Consider the following 383-residue polypeptide: Acetylornithine deacetylase (383 aa).

Histidine 80 provides a ligand contact to Zn(2+). Residue aspartate 82 is part of the active site. Residue aspartate 112 coordinates Zn(2+). The active site involves glutamate 144. 3 residues coordinate Zn(2+): glutamate 145, glutamate 169, and histidine 355.

Belongs to the peptidase M20A family. ArgE subfamily. As to quaternary structure, homodimer. Zn(2+) is required as a cofactor. The cofactor is Co(2+). Requires glutathione as cofactor.

Its subcellular location is the cytoplasm. It carries out the reaction N(2)-acetyl-L-ornithine + H2O = L-ornithine + acetate. Its pathway is amino-acid biosynthesis; L-arginine biosynthesis; L-ornithine from N(2)-acetyl-L-ornithine (linear): step 1/1. Its function is as follows. Catalyzes the hydrolysis of the amide bond of N(2)-acetylated L-amino acids. Cleaves the acetyl group from N-acetyl-L-ornithine to form L-ornithine, an intermediate in L-arginine biosynthesis pathway, and a branchpoint in the synthesis of polyamines. The chain is Acetylornithine deacetylase from Edwardsiella ictaluri (strain 93-146).